We begin with the raw amino-acid sequence, 777 residues long: Ral guanine nucleotide dissociation stimulator-like 2 (777 aa).

Positions 1–54 (MLPRPLRLLLDTSPPGGVVLSSFRSRDPEEGGGPGGLVVGGGQEEEEEEEEEAP) are disordered. Residue Ser-13 is modified to Phosphoserine. The span at 31-42 (GGGPGGLVVGGG) shows a compositional bias: gly residues. Over residues 43–54 (QEEEEEEEEEAP) the composition is skewed to acidic residues. One can recognise an N-terminal Ras-GEF domain in the interval 88–212 (SSRRLRAGTL…GSADLIRNLR (125 aa)). One can recognise a Ras-GEF domain in the interval 243-513 (LADHLAEQLT…HRVSCEVEPP (271 aa)). Ser-409 is modified (phosphoserine). Low complexity-rich tracts occupy residues 581 to 610 (SLDS…SPRP) and 618 to 632 (ASCG…EEAS). Disordered regions lie at residues 581–644 (SLDS…GSGP) and 734–766 (RRSS…PRIK). Positions 633-644 (GGTGYGGEGSGP) are enriched in gly residues. The Ras-associating domain occupies 648–735 (DCRIIRVQME…HDFLLRQRRR (88 aa)). The segment covering 740–755 (TPGVTSGPSASGTPPS) has biased composition (low complexity).

In terms of assembly, interacts with SAMD9.

Functionally, probable guanine nucleotide exchange factor. Putative effector of Ras and/or Rap. Associates with the GTP-bound form of Rap 1A and H-Ras in vitro. This is Ral guanine nucleotide dissociation stimulator-like 2 (RGL2) from Homo sapiens (Human).